The primary structure comprises 197 residues: Large ribosomal subunit protein eL15 (197 aa).

The span at 163–172 (GKTSAGRKGR) shows a compositional bias: basic residues. A disordered region spans residues 163 to 197 (GKTSAGRKGRGMQTRGTGTEKTRPSVRSNLNRSKK). Polar residues predominate over residues 186–197 (PSVRSNLNRSKK).

This sequence belongs to the eukaryotic ribosomal protein eL15 family.

In Methanococcoides burtonii (strain DSM 6242 / NBRC 107633 / OCM 468 / ACE-M), this protein is Large ribosomal subunit protein eL15.